A 408-amino-acid chain; its full sequence is Arginine biosynthesis bifunctional protein ArgJ (408 aa).

Substrate is bound by residues Thr-158, Lys-184, Thr-195, Glu-281, Asn-403, and Thr-408. Thr-195 (nucleophile) is an active-site residue.

It belongs to the ArgJ family. As to quaternary structure, heterotetramer of two alpha and two beta chains.

The protein resides in the cytoplasm. It catalyses the reaction N(2)-acetyl-L-ornithine + L-glutamate = N-acetyl-L-glutamate + L-ornithine. It carries out the reaction L-glutamate + acetyl-CoA = N-acetyl-L-glutamate + CoA + H(+). Its pathway is amino-acid biosynthesis; L-arginine biosynthesis; L-ornithine and N-acetyl-L-glutamate from L-glutamate and N(2)-acetyl-L-ornithine (cyclic): step 1/1. It functions in the pathway amino-acid biosynthesis; L-arginine biosynthesis; N(2)-acetyl-L-ornithine from L-glutamate: step 1/4. In terms of biological role, catalyzes two activities which are involved in the cyclic version of arginine biosynthesis: the synthesis of N-acetylglutamate from glutamate and acetyl-CoA as the acetyl donor, and of ornithine by transacetylation between N(2)-acetylornithine and glutamate. The sequence is that of Arginine biosynthesis bifunctional protein ArgJ from Bacillus cereus (strain ATCC 14579 / DSM 31 / CCUG 7414 / JCM 2152 / NBRC 15305 / NCIMB 9373 / NCTC 2599 / NRRL B-3711).